The chain runs to 312 residues: uncharacterized protein (312 aa).

The HTH lysR-type domain maps to 8 to 65 (PGLTCFEIFLAIAEAGSLGGAARELGLTQQAVSRRLASMEAQIGVRLAIRTTRGSQLT). Positions 25-45 (LGGAARELGLTQQAVSRRLAS) form a DNA-binding region, H-T-H motif.

The protein belongs to the LysR transcriptional regulatory family.

This is an uncharacterized protein from Mycobacterium tuberculosis (strain CDC 1551 / Oshkosh).